We begin with the raw amino-acid sequence, 182 residues long: Ribosome-recycling factor (182 aa).

It belongs to the RRF family.

The protein localises to the cytoplasm. Its function is as follows. Responsible for the release of ribosomes from messenger RNA at the termination of protein biosynthesis. May increase the efficiency of translation by recycling ribosomes from one round of translation to another. This is Ribosome-recycling factor from Prochlorococcus marinus (strain MIT 9312).